Consider the following 419-residue polypeptide: Gamma-glutamyl phosphate reductase (419 aa).

It belongs to the gamma-glutamyl phosphate reductase family.

The protein resides in the cytoplasm. It carries out the reaction L-glutamate 5-semialdehyde + phosphate + NADP(+) = L-glutamyl 5-phosphate + NADPH + H(+). The protein operates within amino-acid biosynthesis; L-proline biosynthesis; L-glutamate 5-semialdehyde from L-glutamate: step 2/2. Functionally, catalyzes the NADPH-dependent reduction of L-glutamate 5-phosphate into L-glutamate 5-semialdehyde and phosphate. The product spontaneously undergoes cyclization to form 1-pyrroline-5-carboxylate. This Maridesulfovibrio salexigens (strain ATCC 14822 / DSM 2638 / NCIMB 8403 / VKM B-1763) (Desulfovibrio salexigens) protein is Gamma-glutamyl phosphate reductase.